The chain runs to 540 residues: Bifunctional purine biosynthesis protein PurH (540 aa).

Positions 1–144 constitute an MGS-like domain; it reads MKRALISVYD…KNYQDVGVVV (144 aa). Positions 204 to 224 are disordered; it reads ETAPERPIGADPGPQKPAAPS.

The protein belongs to the PurH family.

It carries out the reaction (6R)-10-formyltetrahydrofolate + 5-amino-1-(5-phospho-beta-D-ribosyl)imidazole-4-carboxamide = 5-formamido-1-(5-phospho-D-ribosyl)imidazole-4-carboxamide + (6S)-5,6,7,8-tetrahydrofolate. It catalyses the reaction IMP + H2O = 5-formamido-1-(5-phospho-D-ribosyl)imidazole-4-carboxamide. The protein operates within purine metabolism; IMP biosynthesis via de novo pathway; 5-formamido-1-(5-phospho-D-ribosyl)imidazole-4-carboxamide from 5-amino-1-(5-phospho-D-ribosyl)imidazole-4-carboxamide (10-formyl THF route): step 1/1. Its pathway is purine metabolism; IMP biosynthesis via de novo pathway; IMP from 5-formamido-1-(5-phospho-D-ribosyl)imidazole-4-carboxamide: step 1/1. The chain is Bifunctional purine biosynthesis protein PurH from Symbiobacterium thermophilum (strain DSM 24528 / JCM 14929 / IAM 14863 / T).